Reading from the N-terminus, the 261-residue chain is ATP synthase subunit a (261 aa).

Positions 1–14 are cleaved as a propeptide — removed in mature form; that stretch reads MSTLSFNNISTEVL. 7 consecutive transmembrane segments (helical) span residues 38-58, 96-116, 126-146, 153-173, 191-211, 214-234, and 235-255; these read ITNI…INLL, IYFP…LIGM, HFVV…ILGF, FFSL…LVLI, ANIL…YNIM, GIIF…FSGL, and ELGI…GYIK.

This sequence belongs to the ATPase A chain family. In terms of assembly, F-type ATPases have 2 components, CF(1) - the catalytic core - and CF(0) - the membrane proton channel. CF(1) has five subunits: alpha(3), beta(3), gamma(1), delta(1), epsilon(1). CF(0) has three main subunits: a, b and c.

It localises to the mitochondrion inner membrane. Its function is as follows. Mitochondrial membrane ATP synthase (F(1)F(0) ATP synthase or Complex V) produces ATP from ADP in the presence of a proton gradient across the membrane which is generated by electron transport complexes of the respiratory chain. F-type ATPases consist of two structural domains, F(1) - containing the extramembraneous catalytic core and F(0) - containing the membrane proton channel, linked together by a central stalk and a peripheral stalk. During catalysis, ATP synthesis in the catalytic domain of F(1) is coupled via a rotary mechanism of the central stalk subunits to proton translocation. Key component of the proton channel; it may play a direct role in the translocation of protons across the membrane. This chain is ATP synthase subunit a (atp-6), found in Neurospora crassa (strain ATCC 24698 / 74-OR23-1A / CBS 708.71 / DSM 1257 / FGSC 987).